Consider the following 140-residue polypeptide: uncharacterized protein (140 aa).

Over residues 1–15 (MQRQTGHMEDKKRTG) the composition is skewed to basic and acidic residues. The disordered stretch occupies residues 1 to 34 (MQRQTGHMEDKKRTGLESQGTENAFSDGRDGKDG).

This is an uncharacterized protein from Gallus gallus (Chicken).